The chain runs to 505 residues: 2,3-bisphosphoglycerate-independent phosphoglycerate mutase (505 aa).

Asp-11 and Ser-61 together coordinate Mn(2+). The active-site Phosphoserine intermediate is the Ser-61. Substrate is bound by residues His-122, 152–153 (RD), Arg-183, Arg-189, 259–262 (RTDR), and Lys-332. The Mn(2+) site is built by Asp-399, His-403, Asp-440, His-441, and His-458.

It belongs to the BPG-independent phosphoglycerate mutase family. In terms of assembly, monomer. The cofactor is Mn(2+).

The catalysed reaction is (2R)-2-phosphoglycerate = (2R)-3-phosphoglycerate. The protein operates within carbohydrate degradation; glycolysis; pyruvate from D-glyceraldehyde 3-phosphate: step 3/5. In terms of biological role, catalyzes the interconversion of 2-phosphoglycerate and 3-phosphoglycerate. The sequence is that of 2,3-bisphosphoglycerate-independent phosphoglycerate mutase from Flavobacterium johnsoniae (strain ATCC 17061 / DSM 2064 / JCM 8514 / BCRC 14874 / CCUG 350202 / NBRC 14942 / NCIMB 11054 / UW101) (Cytophaga johnsonae).